The primary structure comprises 428 residues: Glutamate-1-semialdehyde 2,1-aminomutase (428 aa).

Lys-267 is modified (N6-(pyridoxal phosphate)lysine).

The protein belongs to the class-III pyridoxal-phosphate-dependent aminotransferase family. HemL subfamily. As to quaternary structure, homodimer. The cofactor is pyridoxal 5'-phosphate.

It is found in the cytoplasm. The enzyme catalyses (S)-4-amino-5-oxopentanoate = 5-aminolevulinate. It participates in porphyrin-containing compound metabolism; protoporphyrin-IX biosynthesis; 5-aminolevulinate from L-glutamyl-tRNA(Glu): step 2/2. The chain is Glutamate-1-semialdehyde 2,1-aminomutase from Flavobacterium johnsoniae (strain ATCC 17061 / DSM 2064 / JCM 8514 / BCRC 14874 / CCUG 350202 / NBRC 14942 / NCIMB 11054 / UW101) (Cytophaga johnsonae).